A 199-amino-acid chain; its full sequence is Phosphoserine phosphatase RsbX (199 aa).

Positions Gln11–Leu198 constitute a PPM-type phosphatase domain.

It carries out the reaction O-phospho-L-serine + H2O = L-serine + phosphate. It catalyses the reaction O-phospho-D-serine + H2O = D-serine + phosphate. Functionally, negative regulator of sigma-B activity. Dephosphorylates RsbS. Plays a role both in maintaining low sigma-B activity during growth and in reestablishing prestress sigma-B activity after induction. Could have a negative feedback role by indirectly communicating sigma-B protein levels. This Bacillus subtilis (strain 168) protein is Phosphoserine phosphatase RsbX (rsbX).